We begin with the raw amino-acid sequence, 552 residues long: Tyrosine-protein kinase Src64B (552 aa).

Residues 95–156 (VLKRVVVALY…PLNFVAEERS (62 aa)) enclose the SH3 domain. The 98-residue stretch at 162-259 (WFFENVLRKE…GLCHILSRPC (98 aa)) folds into the SH2 domain. One can recognise a Protein kinase domain in the interval 284 to 537 (IQLLRKLGRG…TFEFLNHYFE (254 aa)). Residues 290 to 298 (LGRGNFGEV) and Lys312 each bind ATP. Asp404 acts as the Proton acceptor in catalysis. Tyr434 is modified (phosphotyrosine; by autocatalysis).

It belongs to the protein kinase superfamily. Tyr protein kinase family. SRC subfamily. As to quaternary structure, interacts with hzg. Post-translationally, phosphorylated. As to expression, after the first 8 hours of development, accumulates almost exclusively in neural tissues such as the brain, ventral nerve chord, and eye-antennal disks, and in differentiating smooth muscle.

The enzyme catalyses L-tyrosyl-[protein] + ATP = O-phospho-L-tyrosyl-[protein] + ADP + H(+). In terms of biological role, tyrosine-protein kinase that may play a role in the development of neural tissue and smooth muscle. May contribute to tyrosine phosphorylation of Dscam1, a cell surface receptor involved in targeting of growing axons during eye morphogenesis. This is Tyrosine-protein kinase Src64B (Src64B) from Drosophila melanogaster (Fruit fly).